Consider the following 246-residue polypeptide: Acetoacetyl-CoA reductase (246 aa).

Residues 12–14 and 88–92 each bind NADP(+); these read GGI and CAGIT. Substrate-binding positions include D94 and 147–150; that span reads QFGQ. The Proton acceptor role is filled by Y153. Residue 183–186 participates in NADP(+) binding; that stretch reads PGYV. A substrate-binding site is contributed by 184-185; sequence GY.

The protein belongs to the short-chain dehydrogenases/reductases (SDR) family.

The protein localises to the cytoplasm. It catalyses the reaction a (3R)-3-hydroxyacyl-CoA + NADP(+) = a 3-oxoacyl-CoA + NADPH + H(+). It participates in biopolymer metabolism; poly-(R)-3-hydroxybutanoate biosynthesis. In Allochromatium vinosum (strain ATCC 17899 / DSM 180 / NBRC 103801 / NCIMB 10441 / D) (Chromatium vinosum), this protein is Acetoacetyl-CoA reductase.